The following is a 112-amino-acid chain: UPF0060 membrane protein AAur_4166 (112 aa).

4 consecutive transmembrane segments (helical) span residues 8–28 (ILFVLAAVAEIGGAWLIWQAV), 33–53 (AWWWAGLGVVALGIYGFFAAF), 62–82 (VLAAYGGVFIAGSLGWGMLMD), and 91–111 (VIGAAICIVGVGVIMFAPRPG).

Belongs to the UPF0060 family.

It is found in the cell membrane. The sequence is that of UPF0060 membrane protein AAur_4166 from Paenarthrobacter aurescens (strain TC1).